Consider the following 434-residue polypeptide: UDP-glucose 6-dehydrogenase (434 aa).

NAD(+)-binding positions include 2–19, V11, D30, K35, T121, and E152; that span reads NITF…GVMM. Substrate is bound by residues 148-152, K204, N208, 249-253, and G257; these read EFLRE and FLNAG. Residue C260 is the Nucleophile of the active site. K263 lines the NAD(+) pocket. K321 contributes to the substrate binding site. R328 serves as a coordination point for NAD(+).

Belongs to the UDP-glucose/GDP-mannose dehydrogenase family.

The enzyme catalyses UDP-alpha-D-glucose + 2 NAD(+) + H2O = UDP-alpha-D-glucuronate + 2 NADH + 3 H(+). Its pathway is nucleotide-sugar biosynthesis; UDP-alpha-D-glucuronate biosynthesis; UDP-alpha-D-glucuronate from UDP-alpha-D-glucose: step 1/1. This Rickettsia bellii (strain RML369-C) protein is UDP-glucose 6-dehydrogenase (udg).